A 50-amino-acid polypeptide reads, in one-letter code: Sperm protamine P1 (50 aa).

Belongs to the protamine P1 family. Testis.

It localises to the nucleus. The protein localises to the chromosome. Functionally, protamines substitute for histones in the chromatin of sperm during the haploid phase of spermatogenesis. They compact sperm DNA into a highly condensed, stable and inactive complex. In Trachypithecus phayrei (Phayre's leaf monkey), this protein is Sperm protamine P1 (PRM1).